Reading from the N-terminus, the 290-residue chain is Poly-beta-1,6-N-acetyl-D-glucosamine N-deacetylase (290 aa).

Residues 1–28 (MKYRKLIILVLSILIILPVSTLDGHHIA) form the signal peptide. The region spanning 114–290 (RSVWINFDDM…KRWDGFHEKD (177 aa)) is the NodB homology domain.

It belongs to the polysaccharide deacetylase family.

The protein resides in the secreted. It localises to the cell wall. In terms of biological role, catalyzes the N-deacetylation of poly-beta-1,6-N-acetyl-D-glucosamine (PNAG, also referred to as PIA), a biofilm adhesin polysaccharide. N-deacetylation is crucial for attachment of the polysaccharide to the bacterial cell surface; it leads to the introduction of positive charges in the otherwise neutral PIA polymer, allowing electrostatic interactions. This Staphylococcus aureus (strain MRSA252) protein is Poly-beta-1,6-N-acetyl-D-glucosamine N-deacetylase (icaB).